Here is a 250-residue protein sequence, read N- to C-terminus: AA9 family lytic polysaccharide monooxygenase E (250 aa).

Positions 1–21 (MAMSKIMSLTGLLASASLVAG) are cleaved as a signal peptide. Cu(2+)-binding residues include His-22 and His-107. Disulfide bonds link Cys-77/Cys-199 and Cys-118/Cys-122. The N-linked (GlcNAc...) asparagine glycan is linked to Asn-159. O2 contacts are provided by His-185 and Gln-194. Tyr-196 is a Cu(2+) binding site.

The protein belongs to the polysaccharide monooxygenase AA9 family. Cu(2+) serves as cofactor.

It localises to the secreted. It carries out the reaction [(1-&gt;4)-beta-D-glucosyl]n+m + reduced acceptor + O2 = 4-dehydro-beta-D-glucosyl-[(1-&gt;4)-beta-D-glucosyl]n-1 + [(1-&gt;4)-beta-D-glucosyl]m + acceptor + H2O.. Lytic polysaccharide monooxygenase (LPMO) that depolymerizes crystalline and amorphous polysaccharides via the oxidation of scissile alpha- or beta-(1-4)-glycosidic bonds, yielding C1 or C4 oxidation products. Catalysis by LPMOs requires the reduction of the active-site copper from Cu(II) to Cu(I) by a reducing agent and H(2)O(2) or O(2) as a cosubstrate. The sequence is that of AA9 family lytic polysaccharide monooxygenase E from Aspergillus tamarii.